The chain runs to 346 residues: Probable disease resistance protein At5g45440 (346 aa).

An NB-ARC domain is found at 38-116 (KQVEDRVETD…AYAPRIWVSM (79 aa)). 85–92 (GEYGVGKT) contributes to the ATP binding site. Residues 315–346 (FDDGKANQNGSKDGKTDSVDNPNSEESKTKPL) are disordered.

In terms of biological role, possible disease resistance protein. The sequence is that of Probable disease resistance protein At5g45440 from Arabidopsis thaliana (Mouse-ear cress).